Consider the following 586-residue polypeptide: Anaerobic glycerol-3-phosphate dehydrogenase subunit A1 (586 aa).

FAD is bound at residue 6–34 (SVLVIGGGSTGTGIARDLAMRGLDVTLVE). Residues 559 to 586 (GGAVADGGRERAADRADDDALGGADGDN) are disordered. The segment covering 574 to 586 (ADDDALGGADGDN) has biased composition (acidic residues).

Belongs to the FAD-dependent glycerol-3-phosphate dehydrogenase family. Composed of a catalytic GlpA/B dimer and of membrane bound GlpC. FAD serves as cofactor. It depends on FMN as a cofactor.

Its subcellular location is the cell membrane. The catalysed reaction is a quinone + sn-glycerol 3-phosphate = dihydroxyacetone phosphate + a quinol. It participates in polyol metabolism; glycerol degradation via glycerol kinase pathway; glycerone phosphate from sn-glycerol 3-phosphate (anaerobic route): step 1/1. With respect to regulation, up-regulated by glycerol and no inhibition by glucose. Functionally, conversion of glycerol 3-phosphate to dihydroxyacetone phosphate. Required for growth on glycerol and for glycerol metabolism. In Haloferax volcanii (strain ATCC 29605 / DSM 3757 / JCM 8879 / NBRC 14742 / NCIMB 2012 / VKM B-1768 / DS2) (Halobacterium volcanii), this protein is Anaerobic glycerol-3-phosphate dehydrogenase subunit A1 (gpdA1).